The primary structure comprises 449 residues: MRVTFNDVKTSLGVTESYDIINAIRNSATDNFKTYVPLANAENVAEVGAGILVNQTVQNEFLTSLVDRIGLVIVKSISLRNPLAKFKKGALPMGRTIEEIFTDITKEKLYDAEEAEQKVFEREIPNVKTLFHERNRQSFYHQTIQDDSLKTAFISWGNFESFIASIINAIYNSAEVDEYEYMKLIIDNYYSKGLFKVVKVDDPMTSTGALTNFIKKARATALKMTLPQGTRDYNAMAVRTRSDIRDVHLFIDADLNAELDVDVLAKAFNMDRTTFLGNVTVIDGFASTGLKAVMVDKDWFMVYDTLQKMETIRNPRGLYWNYYYHVWQVLSASRFANAVAFVTGDDVPAVTQVIVSPAIASVKQGKSQAFTAYVRATDDKEHEVVWSVDGGSTGTSISSDGVLTVAANETNQLTVKATVDIGTADEPKPVVGEAVVNVRPDSSTGGAQA.

The BIG2 domain maps to 349–427 (AVTQVIVSPA…TVDIGTADEP (79 aa)).

It belongs to the phi29likevirus major capsid protein family. Homohexamer. Homopentamer. The prolate capsid is composed of pentamers and hexamers of the capsid protein.

Its subcellular location is the virion. Functionally, assembles to form a prolate capsid shell of about 54 nm in length and 45 nm in width, with a T=3, Q=5 symmetry. This is Major capsid protein (8) from Bacillus subtilis (Bacteriophage B103).